A 1414-amino-acid polypeptide reads, in one-letter code: DNA-directed RNA polymerase subunit beta' (1414 aa).

Residues Cys-70, Cys-72, Cys-85, and Cys-88 each coordinate Zn(2+). Asp-460, Asp-462, and Asp-464 together coordinate Mg(2+). Zn(2+) is bound by residues Cys-814, Cys-888, Cys-895, and Cys-898. The disordered stretch occupies residues 1378–1414; the sequence is EREAARQLANPFEDAPVTVGGEPEAPAADTPSDDSAE.

The protein belongs to the RNA polymerase beta' chain family. As to quaternary structure, the RNAP catalytic core consists of 2 alpha, 1 beta, 1 beta' and 1 omega subunit. When a sigma factor is associated with the core the holoenzyme is formed, which can initiate transcription. The cofactor is Mg(2+). It depends on Zn(2+) as a cofactor.

The enzyme catalyses RNA(n) + a ribonucleoside 5'-triphosphate = RNA(n+1) + diphosphate. Functionally, DNA-dependent RNA polymerase catalyzes the transcription of DNA into RNA using the four ribonucleoside triphosphates as substrates. The sequence is that of DNA-directed RNA polymerase subunit beta' from Bordetella bronchiseptica (strain ATCC BAA-588 / NCTC 13252 / RB50) (Alcaligenes bronchisepticus).